The chain runs to 464 residues: 3-isopropylmalate dehydratase large subunit (464 aa).

Positions 337, 397, and 400 each coordinate [4Fe-4S] cluster.

The protein belongs to the aconitase/IPM isomerase family. LeuC type 1 subfamily. Heterodimer of LeuC and LeuD. [4Fe-4S] cluster is required as a cofactor.

It carries out the reaction (2R,3S)-3-isopropylmalate = (2S)-2-isopropylmalate. The protein operates within amino-acid biosynthesis; L-leucine biosynthesis; L-leucine from 3-methyl-2-oxobutanoate: step 2/4. Functionally, catalyzes the isomerization between 2-isopropylmalate and 3-isopropylmalate, via the formation of 2-isopropylmaleate. The chain is 3-isopropylmalate dehydratase large subunit from Bacillus thuringiensis subsp. konkukian (strain 97-27).